The sequence spans 207 residues: Large ribosomal subunit protein uL4 (207 aa).

A disordered region spans residues 44–71 (RRQGTQSAKTRAEVRGGGRKPWKQKGTG). The span at 60–71 (GGRKPWKQKGTG) shows a compositional bias: basic residues.

It belongs to the universal ribosomal protein uL4 family. In terms of assembly, part of the 50S ribosomal subunit.

Its function is as follows. One of the primary rRNA binding proteins, this protein initially binds near the 5'-end of the 23S rRNA. It is important during the early stages of 50S assembly. It makes multiple contacts with different domains of the 23S rRNA in the assembled 50S subunit and ribosome. In terms of biological role, forms part of the polypeptide exit tunnel. The chain is Large ribosomal subunit protein uL4 from Alkaliphilus oremlandii (strain OhILAs) (Clostridium oremlandii (strain OhILAs)).